A 465-amino-acid chain; its full sequence is Kynureninase (465 aa).

Pyridoxal 5'-phosphate is bound by residues leucine 133, threonine 134, 161 to 164 (FPSD), serine 217, aspartate 246, histidine 249, and tyrosine 271. Lysine 272 carries the post-translational modification N6-(pyridoxal phosphate)lysine. Tryptophan 302 and asparagine 330 together coordinate pyridoxal 5'-phosphate.

The protein belongs to the kynureninase family. As to quaternary structure, homodimer. The cofactor is pyridoxal 5'-phosphate.

It localises to the cytoplasm. It catalyses the reaction L-kynurenine + H2O = anthranilate + L-alanine + H(+). The enzyme catalyses 3-hydroxy-L-kynurenine + H2O = 3-hydroxyanthranilate + L-alanine + H(+). The protein operates within amino-acid degradation; L-kynurenine degradation; L-alanine and anthranilate from L-kynurenine: step 1/1. It participates in cofactor biosynthesis; NAD(+) biosynthesis; quinolinate from L-kynurenine: step 2/3. Its function is as follows. Catalyzes the cleavage of L-kynurenine (L-Kyn) and L-3-hydroxykynurenine (L-3OHKyn) into anthranilic acid (AA) and 3-hydroxyanthranilic acid (3-OHAA), respectively. The polypeptide is Kynureninase (Nematostella vectensis (Starlet sea anemone)).